Here is a 145-residue protein sequence, read N- to C-terminus: Dihydrolipoyllysine-residue succinyltransferase component of 2-oxoglutarate dehydrogenase complex, mitochondrial (145 aa).

In terms of domain architecture, Lipoyl-binding spans 4-31; sequence ITVQTPAFAESVTEGDVRVEGGTPLFTL. A Phosphoserine modification is found at Ser14. N6-acetyllysine is present on residues Lys36 and Lys66. Catalysis depends on residues His119 and Asp123.

Belongs to the 2-oxoacid dehydrogenase family. As to quaternary structure, the 2-oxoglutarate dehydrogenase complex is composed of OGDH (2-oxoglutarate dehydrogenase; E1), DLST (dihydrolipoamide succinyltransferase; E2), DLD (dihydrolipoamide dehydrogenase; E3) and the assembly factor KGD4. It contains multiple copies of the three enzymatic components (E1, E2 and E3). In the nucleus, the 2-oxoglutarate dehydrogenase complex associates with KAT2A. Interacts with ABHD11; this interaction maintains the functional lipoylation of the 2-oxoglutarate dehydrogenase complex. The cofactor is (R)-lipoate.

It is found in the mitochondrion matrix. The protein localises to the nucleus. The enzyme catalyses N(6)-[(R)-dihydrolipoyl]-L-lysyl-[protein] + succinyl-CoA = N(6)-[(R)-S(8)-succinyldihydrolipoyl]-L-lysyl-[protein] + CoA. It functions in the pathway amino-acid degradation; L-lysine degradation via saccharopine pathway; glutaryl-CoA from L-lysine: step 6/6. Its pathway is carbohydrate metabolism; tricarboxylic acid cycle. In terms of biological role, dihydrolipoamide succinyltransferase (E2) component of the 2-oxoglutarate dehydrogenase complex. The 2-oxoglutarate dehydrogenase complex catalyzes the overall conversion of 2-oxoglutarate to succinyl-CoA and CO(2). The 2-oxoglutarate dehydrogenase complex is mainly active in the mitochondrion. A fraction of the 2-oxoglutarate dehydrogenase complex also localizes in the nucleus and is required for lysine succinylation of histones: associates with KAT2A on chromatin and provides succinyl-CoA to histone succinyltransferase KAT2A. In Mesocricetus auratus (Golden hamster), this protein is Dihydrolipoyllysine-residue succinyltransferase component of 2-oxoglutarate dehydrogenase complex, mitochondrial.